A 159-amino-acid chain; its full sequence is Heavy metal-associated isoprenylated plant protein 28 (159 aa).

In terms of domain architecture, HMA spans 10 to 73 (LQTIEMRVHM…KVRKTGRRAE (64 aa)). A metal cation is bound by residues Cys-21 and Cys-24. Cys-156 is subject to Cysteine methyl ester. The S-farnesyl cysteine moiety is linked to residue Cys-156. Positions 157–159 (SIM) are cleaved as a propeptide — removed in mature form.

Belongs to the HIPP family.

Heavy-metal-binding protein. The chain is Heavy metal-associated isoprenylated plant protein 28 from Arabidopsis thaliana (Mouse-ear cress).